The sequence spans 86 residues: DNA-directed RNA polymerase subunit Rpo6 (86 aa).

It belongs to the archaeal Rpo6/eukaryotic RPB6 RNA polymerase subunit family. In terms of assembly, part of the RNA polymerase complex.

It localises to the cytoplasm. It catalyses the reaction RNA(n) + a ribonucleoside 5'-triphosphate = RNA(n+1) + diphosphate. Its function is as follows. DNA-dependent RNA polymerase (RNAP) catalyzes the transcription of DNA into RNA using the four ribonucleoside triphosphates as substrates. In Sulfurisphaera tokodaii (strain DSM 16993 / JCM 10545 / NBRC 100140 / 7) (Sulfolobus tokodaii), this protein is DNA-directed RNA polymerase subunit Rpo6.